The chain runs to 503 residues: Protein O-glucosyltransferase 3 (503 aa).

An N-terminal signal peptide occupies residues Met-1–Gly-19. One copy of the Filamin repeat lies at Gly-19 to Gly-129. N-linked (GlcNAc...) asparagine glycosylation is found at Asn-56 and Asn-302. The short motif at Arg-500–Leu-503 is the Prevents secretion from ER element.

The protein belongs to the KDELC family.

It localises to the endoplasmic reticulum lumen. It catalyses the reaction L-seryl-[EGF-like domain protein] + UDP-alpha-D-glucose = 3-O-(beta-D-glucosyl)-L-seryl-[EGF-like domain protein] + UDP + H(+). The enzyme catalyses L-seryl-[EGF-like domain protein] + UDP-alpha-D-xylose = 3-O-(beta-D-xylosyl)-L-seryl-[EGF-like domain protein] + UDP + H(+). The protein operates within protein modification; protein glycosylation. Its function is as follows. Protein glucosyltransferase that catalyzes the transfer of glucose from UDP-glucose to a serine residue within the consensus sequence peptide C-X-N-T-X-G-S-F-X-C. Can also catalyze the transfer of xylose from UDP-xylose but less efficiently. Specifically targets extracellular EGF repeats of proteins such as NOTCH1, NOTCH3, FBN1, FBN2 and LTBP1. May regulate the transport of NOTCH1 and NOTCH3 to the plasma membrane and thereby the Notch signaling pathway. The protein is Protein O-glucosyltransferase 3 (Poglut3) of Mus musculus (Mouse).